A 226-amino-acid chain; its full sequence is Beta-casein (226 aa).

Residues 1-51 are disordered; sequence REKEELNVSSETVESLSSNEPDSSSEESITHINKEKSQKFKHEGQQQREVE. Phosphoserine is present on Ser-9. Thr-12 carries the post-translational modification Phosphothreonine. Ser-15, Ser-17, Ser-18, and Ser-25 each carry phosphoserine. Residues 28–51 are compositionally biased toward basic and acidic residues; the sequence is SITHINKEKSQKFKHEGQQQREVE.

It belongs to the beta-casein family. In terms of processing, there are at least three different forms found in milk, with varying degrees of phosphorylation. These include form 5-P which is phosphorylated at three sites, this form is present in low amounts, form 6-P which is phosphorylated at six sites, and form 7-P which is phosphorylated at seven sites. In terms of tissue distribution, mammary gland specific. Secreted in milk.

It is found in the secreted. In terms of biological role, important role in determination of the surface properties of the casein micelles. This is Beta-casein from Equus asinus (Donkey).